Reading from the N-terminus, the 226-residue chain is Putative N-acetylmannosamine-6-phosphate 2-epimerase 1 (226 aa).

The protein belongs to the NanE family.

The catalysed reaction is an N-acyl-D-glucosamine 6-phosphate = an N-acyl-D-mannosamine 6-phosphate. The protein operates within amino-sugar metabolism; N-acetylneuraminate degradation; D-fructose 6-phosphate from N-acetylneuraminate: step 3/5. Converts N-acetylmannosamine-6-phosphate (ManNAc-6-P) to N-acetylglucosamine-6-phosphate (GlcNAc-6-P). The polypeptide is Putative N-acetylmannosamine-6-phosphate 2-epimerase 1 (Salmonella paratyphi A (strain ATCC 9150 / SARB42)).